A 725-amino-acid polypeptide reads, in one-letter code: Probable dipeptidyl-peptidase 5 (725 aa).

Residues 1–18 (MGALRWLSIAATASTALA) form the signal peptide. 6 N-linked (GlcNAc...) asparagine glycosylation sites follow: asparagine 75, asparagine 96, asparagine 153, asparagine 258, asparagine 383, and asparagine 453. The active-site Charge relay system is serine 563. Asparagine 610 carries N-linked (GlcNAc...) asparagine glycosylation. Residues aspartate 646 and histidine 678 each act as charge relay system in the active site.

It belongs to the peptidase S9C family.

It localises to the secreted. Functionally, extracellular dipeptidyl-peptidase which removes N-terminal dipeptides sequentially from polypeptides having unsubstituted N-termini. The sequence is that of Probable dipeptidyl-peptidase 5 (dpp5) from Aspergillus flavus (strain ATCC 200026 / FGSC A1120 / IAM 13836 / NRRL 3357 / JCM 12722 / SRRC 167).